Here is a 119-residue protein sequence, read N- to C-terminus: Large ribosomal subunit protein bL20 (119 aa).

It belongs to the bacterial ribosomal protein bL20 family.

In terms of biological role, binds directly to 23S ribosomal RNA and is necessary for the in vitro assembly process of the 50S ribosomal subunit. It is not involved in the protein synthesizing functions of that subunit. This is Large ribosomal subunit protein bL20 from Xanthomonas campestris pv. campestris (strain 8004).